A 478-amino-acid chain; its full sequence is Probable sodium/glutamine symporter GlnT (478 aa).

Helical transmembrane passes span 14-34 (DLLW…YFTF), 85-105 (IAIA…IIAI), 145-165 (WMGA…FNSV), 185-205 (LGLI…KRIA), 211-231 (IVVV…FSNI), 236-256 (GVLA…GGAL), 298-318 (AFGV…IILF), 342-362 (GSWA…CALI), 381-401 (LIFV…VAKV), and 411-431 (FMGL…KVVF).

This sequence belongs to the alanine or glycine:cation symporter (AGCS) (TC 2.A.25) family.

The protein resides in the cell membrane. Functionally, probably functions as a sodium/glutamine symporter for glutamine uptake. The chain is Probable sodium/glutamine symporter GlnT (glnT) from Bacillus subtilis (strain 168).